Consider the following 304-residue polypeptide: Thymidylate synthase (304 aa).

Residues Arg30 and 157 to 158 each bind dUMP; that span reads RR. Catalysis depends on Cys177, which acts as the Nucleophile. Residues 206 to 209, Asn217, and 247 to 249 contribute to the dUMP site; these read RSCD and HVY. Asp209 is a (6R)-5,10-methylene-5,6,7,8-tetrahydrofolate binding site.

The protein belongs to the thymidylate synthase family. As to quaternary structure, homodimer.

Its subcellular location is the nucleus. It catalyses the reaction dUMP + (6R)-5,10-methylene-5,6,7,8-tetrahydrofolate = 7,8-dihydrofolate + dTMP. It participates in pyrimidine metabolism; dTTP biosynthesis. Inhibited by 5-fluoro-2'-deoxyuridine 5'-monophosphate (FdUMP). In terms of biological role, thymidylate synthase required for de novo biosynthesis of pyrimidine deoxyribonucleotides. Required for both nuclear and mitochondrial DNA synthesis. The protein is Thymidylate synthase (CDC21) of Saccharomyces cerevisiae (strain ATCC 204508 / S288c) (Baker's yeast).